The primary structure comprises 498 residues: ATP synthase subunit beta, chloroplastic (498 aa).

Gly172–Thr179 lines the ATP pocket.

It belongs to the ATPase alpha/beta chains family. F-type ATPases have 2 components, CF(1) - the catalytic core - and CF(0) - the membrane proton channel. CF(1) has five subunits: alpha(3), beta(3), gamma(1), delta(1), epsilon(1). CF(0) has four main subunits: a(1), b(1), b'(1) and c(9-12).

It is found in the plastid. The protein localises to the chloroplast thylakoid membrane. The enzyme catalyses ATP + H2O + 4 H(+)(in) = ADP + phosphate + 5 H(+)(out). Produces ATP from ADP in the presence of a proton gradient across the membrane. The catalytic sites are hosted primarily by the beta subunits. This Canella winterana (Wild cinnamon) protein is ATP synthase subunit beta, chloroplastic.